The sequence spans 320 residues: Beta-carotene ketolase (320 aa).

It carries out the reaction all-trans-beta-carotene + 2 AH2 + 2 O2 = echinenone + 2 A + 3 H2O. The enzyme catalyses echinenone + 2 AH2 + 2 O2 = canthaxanthin + 2 A + 3 H2O. It participates in carotenoid biosynthesis; astaxanthin biosynthesis. Functionally, converts beta-carotene to canthaxanthin via echinenone. This Haematococcus lacustris (Green alga) protein is Beta-carotene ketolase.